The primary structure comprises 91 residues: Small ribosomal subunit protein bS18 (91 aa).

The protein belongs to the bacterial ribosomal protein bS18 family. In terms of assembly, part of the 30S ribosomal subunit. Forms a tight heterodimer with protein bS6.

Binds as a heterodimer with protein bS6 to the central domain of the 16S rRNA, where it helps stabilize the platform of the 30S subunit. This is Small ribosomal subunit protein bS18 from Syntrophotalea carbinolica (strain DSM 2380 / NBRC 103641 / GraBd1) (Pelobacter carbinolicus).